A 95-amino-acid chain; its full sequence is Aspartyl/glutamyl-tRNA(Asn/Gln) amidotransferase subunit C (95 aa).

It belongs to the GatC family. As to quaternary structure, heterotrimer of A, B and C subunits.

The enzyme catalyses L-glutamyl-tRNA(Gln) + L-glutamine + ATP + H2O = L-glutaminyl-tRNA(Gln) + L-glutamate + ADP + phosphate + H(+). It carries out the reaction L-aspartyl-tRNA(Asn) + L-glutamine + ATP + H2O = L-asparaginyl-tRNA(Asn) + L-glutamate + ADP + phosphate + 2 H(+). Functionally, allows the formation of correctly charged Asn-tRNA(Asn) or Gln-tRNA(Gln) through the transamidation of misacylated Asp-tRNA(Asn) or Glu-tRNA(Gln) in organisms which lack either or both of asparaginyl-tRNA or glutaminyl-tRNA synthetases. The reaction takes place in the presence of glutamine and ATP through an activated phospho-Asp-tRNA(Asn) or phospho-Glu-tRNA(Gln). The polypeptide is Aspartyl/glutamyl-tRNA(Asn/Gln) amidotransferase subunit C (Nitrosospira multiformis (strain ATCC 25196 / NCIMB 11849 / C 71)).